The following is a 386-amino-acid chain: Putative gustatory receptor 22b (386 aa).

Over 1 to 48 the chain is Cytoplasmic; the sequence is MFGSSREIRPYLARQMLKTTLYGSWLLGIFPFTLDSGKRIRQLRRSRC. The helical transmembrane segment at 49–69 threads the bilayer; that stretch reads LTLYGLVLNYFLIFTLIRLAF. Residues 70-89 lie on the Extracellular side of the membrane; that stretch reads EYRKHKLEAFKRNPVLEMIN. Residues 90–110 traverse the membrane as a helical segment; it reads VVIGIINVLSALIVHFMNFWG. Over 111 to 155 the chain is Cytoplasmic; it reads SRKVGEICNELLILEYQDFEGLNGRNCPNFNCFVIQKCLTILGQL. Residues 156-176 traverse the membrane as a helical segment; the sequence is LSFFTLNFALPGLEFHICLVL. Topologically, residues 177-178 are extracellular; the sequence is LS. A helical transmembrane segment spans residues 179–199; it reads CLMEFSLNLNIMHYHVGVLLI. Over 200 to 254 the chain is Cytoplasmic; that stretch reads YRYVWLINEQLKDLVSQLKLNPETDFSRIHQFLSLYKRLLELNRKLVIAYEYQMT. Residues 255–275 traverse the membrane as a helical segment; the sequence is LFIIAQLSGNIVVIYFLIVYG. Residues 276–282 lie on the Extracellular side of the membrane; the sequence is LSMRTYS. The chain crosses the membrane as a helical span at residues 283–303; it reads IFLVAFPNSLLINIWDFWLCI. Residues 304-363 are Cytoplasmic-facing; the sequence is AACDLTEKAGDETAIILKIFSDLEHRDDKLEMSVNEFAWLCSHRKFRFQLCGLFSMNCRM. A helical membrane pass occupies residues 364–384; sequence GFKMIITTFLYLVYLVQFDYM. The Extracellular portion of the chain corresponds to 385-386; it reads NL.

Belongs to the insect chemoreceptor superfamily. Gustatory receptor (GR) family. Gr22e subfamily. Expressed in taste bristles in the foreleg and labial palps. In larvae, is expressed in neurons of the dorsal and posterior pharyngeal sense organs. Expressed in taste neurons that mediate sensitivity to bitter compounds.

The protein localises to the cell membrane. Its function is as follows. Probable gustatory receptor which mediates acceptance or avoidance behavior, depending on its substrates. Seems to be involved in the sensing of bitter taste since it is expressed in neurons that mediate sensitivity to bitter compounds. The polypeptide is Putative gustatory receptor 22b (Drosophila melanogaster (Fruit fly)).